Consider the following 123-residue polypeptide: Succinate dehydrogenase assembly factor 3, mitochondrial (123 aa).

A mitochondrion-targeting transit peptide spans 1–31 (MANPAHISAVRTLYKKILVLHRFLPIDLRAL).

This sequence belongs to the complex I LYR family. SDHAF3 subfamily. As to quaternary structure, interacts with sdhb within an sdha-sdhb subcomplex.

It is found in the mitochondrion matrix. In terms of biological role, plays an essential role in the assembly of succinate dehydrogenase (SDH), an enzyme complex (also referred to as respiratory complex II) that is a component of both the tricarboxylic acid (TCA) cycle and the mitochondrial electron transport chain, and which couples the oxidation of succinate to fumarate with the reduction of ubiquinone (coenzyme Q) to ubiquinol. Promotes maturation of the iron-sulfur protein subunit sdhb of the SDH catalytic dimer, protecting it from the deleterious effects of oxidants. May act together with SDHAF1. The polypeptide is Succinate dehydrogenase assembly factor 3, mitochondrial (Danio rerio (Zebrafish)).